The following is a 997-amino-acid chain: Kinesin-like protein KIF19 (997 aa).

In terms of domain architecture, Kinesin motor spans 11–346; the sequence is QLTVALRIRP…LTYADRAKNI (336 aa). 104 to 111 provides a ligand contact to ATP; the sequence is GPTGCGKT. The stretch at 360–437 forms a coiled coil; the sequence is HIAQYTSIIS…REQMDIRRQL (78 aa). Positions 468–491 are enriched in basic and acidic residues; the sequence is RARKWRDEHRKETYGKDDSEKDSD. Residues 468-503 form a disordered region; that stretch reads RARKWRDEHRKETYGKDDSEKDSDTGDDQSDFIEPP. Positions 508–577 form a coiled coil; sequence ARETIQILEG…ELEIENTEMQ (70 aa). Disordered stretches follow at residues 662–690, 792–811, and 848–890; these read NLTA…RNPI, GDRL…SMSE, and GGGS…SRSF. Basic and acidic residues-rich tracts occupy residues 792–802 and 869–880; these read GDRLQPMKERS and QKLEKREESLEV. A coiled-coil region spans residues 861 to 889; it reads HRTQKKQAQKLEKREESLEVKRRKKRSRS.

The protein belongs to the TRAFAC class myosin-kinesin ATPase superfamily. Kinesin family.

The protein resides in the cytoplasm. Its subcellular location is the cytoskeleton. The protein localises to the cell projection. It localises to the cilium. In terms of biological role, plus end-directed microtubule-dependent motor protein that regulates the length of motile cilia by mediating depolymerization of microtubules at ciliary tips. This chain is Kinesin-like protein KIF19 (kif19), found in Xenopus laevis (African clawed frog).